The chain runs to 455 residues: Glutamyl-tRNA reductase (455 aa).

Substrate is bound by residues threonine 49–arginine 52, serine 109, glutamate 114–glutamine 116, and glutamine 120. Cysteine 50 functions as the Nucleophile in the catalytic mechanism. Glycine 189–glycine 194 is a binding site for NADP(+).

Belongs to the glutamyl-tRNA reductase family. Homodimer.

It catalyses the reaction (S)-4-amino-5-oxopentanoate + tRNA(Glu) + NADP(+) = L-glutamyl-tRNA(Glu) + NADPH + H(+). It participates in porphyrin-containing compound metabolism; protoporphyrin-IX biosynthesis; 5-aminolevulinate from L-glutamyl-tRNA(Glu): step 1/2. In terms of biological role, catalyzes the NADPH-dependent reduction of glutamyl-tRNA(Glu) to glutamate 1-semialdehyde (GSA). The protein is Glutamyl-tRNA reductase of Bacillus pumilus (strain SAFR-032).